The following is a 73-amino-acid chain: Translation initiation factor IF-1 (73 aa).

Residues 1–73 (MAKKDGAIEI…TRGRIVYRYK (73 aa)) form the S1-like domain.

It belongs to the IF-1 family. As to quaternary structure, component of the 30S ribosomal translation pre-initiation complex which assembles on the 30S ribosome in the order IF-2 and IF-3, IF-1 and N-formylmethionyl-tRNA(fMet); mRNA recruitment can occur at any time during PIC assembly.

The protein resides in the cytoplasm. Its function is as follows. One of the essential components for the initiation of protein synthesis. Stabilizes the binding of IF-2 and IF-3 on the 30S subunit to which N-formylmethionyl-tRNA(fMet) subsequently binds. Helps modulate mRNA selection, yielding the 30S pre-initiation complex (PIC). Upon addition of the 50S ribosomal subunit IF-1, IF-2 and IF-3 are released leaving the mature 70S translation initiation complex. The sequence is that of Translation initiation factor IF-1 from Thermobifida fusca (strain YX).